A 91-amino-acid polypeptide reads, in one-letter code: Large ribosomal subunit protein uL22 (91 aa).

Belongs to the universal ribosomal protein uL22 family. Part of the 50S ribosomal subunit.

Functionally, this protein binds specifically to 23S rRNA; its binding is stimulated by other ribosomal proteins, e.g. L4, L17, and L20. It is important during the early stages of 50S assembly. It makes multiple contacts with different domains of the 23S rRNA in the assembled 50S subunit and ribosome. Its function is as follows. The globular domain of the protein is located near the polypeptide exit tunnel on the outside of the subunit, while an extended beta-hairpin is found that lines the wall of the exit tunnel in the center of the 70S ribosome. The chain is Large ribosomal subunit protein uL22 (rplV) from Loofah witches'-broom phytoplasma.